Here is a 1161-residue protein sequence, read N- to C-terminus: Cell wall protein DAN4 (1161 aa).

An N-terminal signal peptide occupies residues 1 to 19 (MVNISIVAGIVALATSAAA). 4 disordered regions span residues 123–309 (TSTS…SASS), 326–345 (TPATSTASTDHTTSSVSTTN), 354–547 (TTTS…SSFG), and 691–713 (STDSVSPNIPFSEISSSPESSTA). The 46 X 3 AA tandem repeats of T-[SP]-T stretch occupies residues 134–286 (TSTTPTTTIT…TTSTTSTTST (153 aa)). A compositionally biased stretch (low complexity) spans 354 to 372 (TTTSDTYISSSSPSQVTSS). A run of 14 repeats spans residues 373–384 (AEPTTVSEVTSS), 385–396 (VEPTRSSQVTSS), 397–408 (AEPTTVSEFTSS), 409–420 (VEPTRSSQVTSS), 421–432 (AEPTTVSEFTSS), 433–444 (VEPTRSSQVTSS), 445–456 (AEPTTVSEFTSS), 457–468 (VEPTRSSQVTSS), 469–480 (AEPTTVSEFTSS), 481–492 (VEPTRSSQVTSS), 493–504 (AEPTTVSEFTSS), 505–516 (VEPIRSSQVTSS), 517–528 (AEPTTVSEVTSS), and 529–540 (VEPIRSSQVTTT). The 14 X 12 AA approximate tandem repeats stretch occupies residues 373-540 (AEPTTVSEVT…PIRSSQVTTT (168 aa)). The span at 373–547 (AEPTTVSEVT…TTTEPVSSFG (175 aa)) shows a compositional bias: polar residues. 2 consecutive repeat copies span residues 826–913 (EDSV…EDNE) and 914–1001 (EDIT…EDNE). A 2.5 X 88 AA approximate tandem repeats region spans residues 826–1040 (EDSVLTKTQV…SPVSSFNSKA (215 aa)). One copy of the 2-3; truncated repeat lies at 1002–1040 (EDVASTKTELLTMETTITSCSGGICTTLMSPVSSFNSKA). Asn1137 carries the GPI-anchor amidated asparagine lipid modification. The propeptide at 1138–1161 (GAYNFDKDNIFGTAIVAVVALLLL) is removed in mature form.

The protein belongs to the SRP1/TIP1 family. Extensively O-glycosylated. In terms of processing, the GPI-anchor is attached to the protein in the endoplasmic reticulum and serves to target the protein to the cell surface. There, the glucosamine-inositol phospholipid moiety is cleaved off and the GPI-modified mannoprotein is covalently attached via its lipidless GPI glycan remnant to the 1,6-beta-glucan of the outer cell wall layer.

Its subcellular location is the secreted. It is found in the cell wall. It localises to the cell membrane. Functionally, component of the cell wall. The chain is Cell wall protein DAN4 from Saccharomyces cerevisiae (strain ATCC 204508 / S288c) (Baker's yeast).